The sequence spans 249 residues: Early E1A protein (249 aa).

The tract at residues 38 to 46 (MSLHDLFDV) is interaction with RB1 in competition with E2F1. Residues 74–131 (SAAESGSGDSGVGEELLPVDLDLKCYEDGLPPSDPETDEATEAEEEAAMPTYVNENEN) are interaction with UBE2I. The LXCXE motif, interaction with host RB1 and TMEM173/STING motif lies at 96–100 (LKCYE). A zinc finger spans residues 145–165 (CRACDFHRGTSGNPEAMCALC). The tract at residues 180 to 203 (DAEGESESGSPEDTDFPHPLTATP) is disordered. The segment covering 181–193 (AEGESESGSPEDT) has biased composition (acidic residues). The short motif at 238-242 (PLNLS) is the PXDLS motif, CTBP-binding element. The Nuclear localization signal motif lies at 244-248 (KRPKC).

It belongs to the adenoviridae E1A protein family. In terms of assembly, interacts with host UBE2I; this interaction interferes with polySUMOylation. Interacts with host RB1; this interaction induces the aberrant dissociation of RB1-E2F1 complex thereby disrupting the activity of RB1 and activating E2F1-regulated genes. Interacts with host ATF7; the interaction enhances ATF7-mediated viral transactivation activity which requires the zinc binding domains of both proteins. Isoform early E1A 32 kDa protein and isoform early E1A 26 kDa protein interact (via N-terminus) with CUL1 and E3 ubiquitin ligase RBX1; these interactions inhibit RBX1-CUL1-dependent elongation reaction of ubiquitin chains and attenuate ubiquitination of SCF(FBXW7) target proteins. Interacts (via PXLXP motif) with host ZMYND11/BS69 (via MYND-type zinc finger); this interaction inhibits E1A mediated transactivation. Interacts with host EP300; this interaction stimulates the acetylation of RB1 by recruiting EP300 and RB1 into a multimeric-protein complex. Interacts with host CTBP1 and CTBP2; this interaction seems to potentiate viral replication. Interacts with host DCAF7. Interacts with host DYRK1A. Interacts with host KPNA4; this interaction allows E1A import into the host nucleus. Interacts with host EP400; this interaction stabilizes MYC. Interacts with host TBP protein; this interaction probably disrupts the TBP-TATA complex. Interacts (via LXCXE motif) with host TMEM173/STING; this interaction impairs the ability of TMEM173/STING to sense cytosolic DNA and promote the production of type I interferon (IFN-alpha and IFN-beta). Interacts (via C-terminus) with host ZBED1/hDREF (via C-terminus); the interaction is direct.

The protein localises to the host nucleus. Its function is as follows. Plays a role in viral genome replication by driving entry of quiescent cells into the cell cycle. Stimulation of progression from G1 to S phase allows the virus to efficiently use the cellular DNA replicating machinery to achieve viral genome replication. E1A protein has both transforming and trans-activating activities. Induces the disassembly of the E2F1 transcription factor from RB1 by direct competition for the same binding site on RB1, with subsequent transcriptional activation of E2F1-regulated S-phase genes and of the E2 region of the adenoviral genome. Release of E2F1 leads to the ARF-mediated inhibition of MDM2 and causes TP53/p53 to accumulate because it is not targeted for degradation by MDM2-mediated ubiquitination anymore. This increase in TP53, in turn, would arrest the cell proliferation and direct its death but this effect is counteracted by the viral protein E1B-55K. Inactivation of the ability of RB1 to arrest the cell cycle is critical for cellular transformation, uncontrolled cellular growth and proliferation induced by viral infection. Interaction with RBX1 and CUL1 inhibits ubiquitination of the proteins targeted by SCF(FBXW7) ubiquitin ligase complex, and may be linked to unregulated host cell proliferation. The tumorigenesis-restraining activity of E1A may be related to the disruption of the host CtBP-CtIP complex through the CtBP binding motif. Interaction with host TMEM173/STING impairs the ability of TMEM173/STING to sense cytosolic DNA and promote the production of type I interferon (IFN-alpha and IFN-beta). Promotes the sumoylation of host ZBED1/hDREF with SUMO1. The sequence is that of Early E1A protein from Homo sapiens (Human).